The sequence spans 536 residues: Xylulose kinase (536 aa).

Residues His99, Arg170, Asp280, and Asn281 each coordinate substrate. ATP-binding positions include Trp355, 441–442, and Asn445; that span reads GA.

This sequence belongs to the FGGY kinase family. In terms of assembly, monomer.

It carries out the reaction D-xylulose + ATP = D-xylulose 5-phosphate + ADP + H(+). Its function is as follows. Phosphorylates D-xylulose to produce D-xylulose 5-phosphate, a molecule that may play an important role in the regulation of glucose metabolism and lipogenesis. The polypeptide is Xylulose kinase (Xylb) (Rattus norvegicus (Rat)).